The primary structure comprises 127 residues: Large ribosomal subunit protein bL17 (127 aa).

It belongs to the bacterial ribosomal protein bL17 family. In terms of assembly, part of the 50S ribosomal subunit. Contacts protein L32.

The sequence is that of Large ribosomal subunit protein bL17 from Ligilactobacillus salivarius (strain UCC118) (Lactobacillus salivarius).